Here is a 121-residue protein sequence, read N- to C-terminus: uncharacterized protein (121 aa).

This is an uncharacterized protein from Streptococcus pyogenes serotype M6 (strain ATCC BAA-946 / MGAS10394).